Here is a 222-residue protein sequence, read N- to C-terminus: Flagellar L-ring protein (222 aa).

Positions 1 to 18 (MRRPGAAALAAAALALAG) are cleaved as a signal peptide. Cys19 carries the N-palmitoyl cysteine lipid modification. The S-diacylglycerol cysteine moiety is linked to residue Cys19.

The protein belongs to the FlgH family. As to quaternary structure, the basal body constitutes a major portion of the flagellar organelle and consists of four rings (L,P,S, and M) mounted on a central rod.

It localises to the cell outer membrane. Its subcellular location is the bacterial flagellum basal body. In terms of biological role, assembles around the rod to form the L-ring and probably protects the motor/basal body from shearing forces during rotation. In Burkholderia mallei (strain ATCC 23344), this protein is Flagellar L-ring protein.